The sequence spans 261 residues: 14-3-3 protein 9 (261 aa).

The segment at 239–261 (PEDAEDAQKGDATNKAGGGEDAE) is disordered.

It belongs to the 14-3-3 family. In terms of assembly, homodimer.

The sequence is that of 14-3-3 protein 9 (TFT9) from Solanum lycopersicum (Tomato).